A 305-amino-acid polypeptide reads, in one-letter code: Spore coat protein CotA (305 aa).

The protein localises to the spore coat. Its subcellular location is the spore. It is found in the perispore. Functionally, contributes to maintain proper thickness of the spore coat. May contribute to the formation of polar appendages. May play an important role in assembly of the outer layers of the spore coat. This Clostridioides difficile (strain 630) (Peptoclostridium difficile) protein is Spore coat protein CotA.